The primary structure comprises 419 residues: MTTQLEQAWELAKQRFAAVGIDVEEALRQLDRLPVSMHCWQGDDVAGFENPEGSLTGGIQSTGNYPGKARNATELRADLEQALRLIPGPKRLNLHAIYLESDTPVARDQIKPEHFKNWVEWAKANRLGLDFNPTCFSHPLSADGFTLSHPDAKIRQFWIDHCKASRRVSAYFGEQLGTPSVMNIWIPDGMKDITVDRLAPRQRLLEALDEVISEKFDPAHHIDAVESKLFGIGAESYTVGSNEFYMGYATSRQTALCLDAGHFHPTEVISDKISAAMLYVPRLLLHVSRPVRWDSDHVVLLDDETQAIASEIVRHNLFDRVHIGLDFFDASINRVAAWVIGTRNMKKALLRALLEPTDQLRQLEASGDYTARLALLEEQKSLPWQAVWEMYCQRHDTPTGSQWLDSVRTYEKEILSKRS.

Histidine 262, aspartate 294, and aspartate 296 together coordinate Mn(2+).

Belongs to the rhamnose isomerase family. In terms of assembly, homotetramer. The cofactor is Mn(2+).

The protein resides in the cytoplasm. It catalyses the reaction L-rhamnopyranose = L-rhamnulose. It participates in carbohydrate degradation; L-rhamnose degradation; glycerone phosphate from L-rhamnose: step 1/3. Functionally, catalyzes the interconversion of L-rhamnose and L-rhamnulose. In Salmonella choleraesuis (strain SC-B67), this protein is L-rhamnose isomerase.